A 205-amino-acid polypeptide reads, in one-letter code: Alpha-1-acid glycoprotein (205 aa).

Positions 1 to 18 are cleaved as a signal peptide; that stretch reads MALHMVLVVLSLLPLLEA. N-linked (GlcNAc...) asparagine glycosylation is found at N25, N34, N76, N94, N104, and N134. Cysteines 91 and 183 form a disulfide.

The protein belongs to the calycin superfamily. Lipocalin family.

It localises to the secreted. Functions as a transport protein in the blood stream. Binds various ligands in the interior of its beta-barrel domain. Appears to function in modulating the activity of the immune system during the acute-phase reaction. The protein is Alpha-1-acid glycoprotein (Orm1) of Rattus norvegicus (Rat).